The chain runs to 868 residues: Monofunctional pimaradiene synthase (868 aa).

Residues D620, D624, N764, T768, and E772 each coordinate Mg(2+).

This sequence belongs to the terpene synthase family. Tpsd subfamily. It depends on Mg(2+) as a cofactor.

It carries out the reaction (+)-copalyl diphosphate = (-)-pimara-8(14),15-diene + diphosphate. It functions in the pathway terpene metabolism; oleoresin biosynthesis. In terms of biological role, involved in defensive oleoresin formation in conifers in response to insect attack or other injury. Involved in diterpene (C20) olefins biosynthesis. Monofunctional enzyme lacking the DXDD motif in the class II active site relevant for the cyclization of geranylgeranyl diphosphate (GGPP). Requires (+)-copalyl diphosphate ((+)-CPP) as substrate, but no activity with GGPP or ent-CPP. Pimaradiene is the major products of the enzyme. The polypeptide is Monofunctional pimaradiene synthase (Pinus banksiana (Jack pine)).